Reading from the N-terminus, the 118-residue chain is NADH-ubiquinone oxidoreductase chain 3 (118 aa).

A run of 3 helical transmembrane segments spans residues 7–27 (ICIS…VPFL), 62–82 (LVSI…PWAV), and 87–107 (IDLF…IGFL).

Belongs to the complex I subunit 3 family.

The protein resides in the mitochondrion membrane. The catalysed reaction is a ubiquinone + NADH + 5 H(+)(in) = a ubiquinol + NAD(+) + 4 H(+)(out). Its function is as follows. Core subunit of the mitochondrial membrane respiratory chain NADH dehydrogenase (Complex I) that is believed to belong to the minimal assembly required for catalysis. Complex I functions in the transfer of electrons from NADH to the respiratory chain. The immediate electron acceptor for the enzyme is believed to be ubiquinone. This Oenothera berteroana (Bertero's evening primrose) protein is NADH-ubiquinone oxidoreductase chain 3 (ND3).